The primary structure comprises 522 residues: MSSDNTPSINRRNNENPPQSSLPTTSGIVYNMFPACPYPHVQNPAFHGSVDVPQVAQKAFDPQAATVSESANVSRPTPAPVPPAGNTNTPTTSNSNQNLENNVTSAASMPAILNAAGQLEFSPSTNNALCCCTTVHGHPHMPPNLLAASSARLRLPPISTILGGTFADPTFLAAAAAAAVPHYAHATTGSATDASNTSNGNSNPAAVPAGFLSGYSPLSYAYFVAKANELALANQRQSSEAAEQPSSKNNTSGANPPSSNNQEVTSAPIPAAPIVLPFQQPFYPIVCPGCAQGALPQHIPVPHNTEFAQYQPSSRDLQNHPTVDESRLSSVAPPASNTLNHANGNQAENASESSTSQSNDSQGPANTSYPVSVPLPNDAENNHTLSRNPYIPSLNFKDNMSAELSVVATLASNSAQAHPMGQQSDSNYSDHHNNDKRAHVSRRHSTSRKIAQSHTGSSSTSSAANVRYRCTECLQGFSRPSSLKIHTYSHTGERPFVCDYAGCGKAFNVRSNMRRHQRIHGL.

Disordered stretches follow at residues 1–25, 61–96, 235–265, 311–386, and 413–462; these read MSSD…LPTT, DPQA…SNSN, QRQS…QEVT, QPSS…HTLS, and NSAQ…STSS. Over residues 84-96 the composition is skewed to low complexity; it reads AGNTNTPTTSNSN. 2 stretches are compositionally biased toward polar residues: residues 311–321 and 335–344; these read QPSSRDLQNHP and ASNTLNHANG. A compositionally biased stretch (low complexity) spans 345 to 362; sequence NQAENASESSTSQSNDSQ. Positions 413–427 are enriched in polar residues; that stretch reads NSAQAHPMGQQSDSN. The span at 428-438 shows a compositional bias: basic and acidic residues; sequence YSDHHNNDKRA. The span at 453-462 shows a compositional bias: low complexity; the sequence is SHTGSSSTSS. 2 consecutive C2H2-type zinc fingers follow at residues 468–495 and 496–522; these read YRCT…GERP and FVCD…IHGL.

Its subcellular location is the nucleus. This Schizosaccharomyces pombe (strain 972 / ATCC 24843) (Fission yeast) protein is Zinc finger protein C25B8.19c.